The chain runs to 192 residues: Orotate phosphoribosyltransferase (192 aa).

116-124 is a 5-phospho-alpha-D-ribose 1-diphosphate binding site; that stretch reads EDIVTTGLS. Residues T120 and R148 each coordinate orotate.

This sequence belongs to the purine/pyrimidine phosphoribosyltransferase family. PyrE subfamily. In terms of assembly, homodimer. It depends on Mg(2+) as a cofactor.

It carries out the reaction orotidine 5'-phosphate + diphosphate = orotate + 5-phospho-alpha-D-ribose 1-diphosphate. Its pathway is pyrimidine metabolism; UMP biosynthesis via de novo pathway; UMP from orotate: step 1/2. Functionally, catalyzes the transfer of a ribosyl phosphate group from 5-phosphoribose 1-diphosphate to orotate, leading to the formation of orotidine monophosphate (OMP). The chain is Orotate phosphoribosyltransferase from Brucella anthropi (strain ATCC 49188 / DSM 6882 / CCUG 24695 / JCM 21032 / LMG 3331 / NBRC 15819 / NCTC 12168 / Alc 37) (Ochrobactrum anthropi).